A 196-amino-acid polypeptide reads, in one-letter code: Imidazole glycerol phosphate synthase subunit HisH (196 aa).

The 195-residue stretch at 2-196 folds into the Glutamine amidotransferase type-1 domain; it reads KVAVVKYNAG…ERVLRNFLDL (195 aa). The Nucleophile role is filled by C77. Catalysis depends on residues H178 and E180.

As to quaternary structure, heterodimer of HisH and HisF.

The protein localises to the cytoplasm. The catalysed reaction is 5-[(5-phospho-1-deoxy-D-ribulos-1-ylimino)methylamino]-1-(5-phospho-beta-D-ribosyl)imidazole-4-carboxamide + L-glutamine = D-erythro-1-(imidazol-4-yl)glycerol 3-phosphate + 5-amino-1-(5-phospho-beta-D-ribosyl)imidazole-4-carboxamide + L-glutamate + H(+). It carries out the reaction L-glutamine + H2O = L-glutamate + NH4(+). Its pathway is amino-acid biosynthesis; L-histidine biosynthesis; L-histidine from 5-phospho-alpha-D-ribose 1-diphosphate: step 5/9. Functionally, IGPS catalyzes the conversion of PRFAR and glutamine to IGP, AICAR and glutamate. The HisH subunit catalyzes the hydrolysis of glutamine to glutamate and ammonia as part of the synthesis of IGP and AICAR. The resulting ammonia molecule is channeled to the active site of HisF. This is Imidazole glycerol phosphate synthase subunit HisH from Bacteroides thetaiotaomicron (strain ATCC 29148 / DSM 2079 / JCM 5827 / CCUG 10774 / NCTC 10582 / VPI-5482 / E50).